A 452-amino-acid chain; its full sequence is Bifunctional protein GlmU (452 aa).

Residues 1 to 218 are pyrophosphorylase; sequence MKVLILAAGL…IVEVSGVNDR (218 aa). Residues 6–9, Lys-20, Gln-68, 73–74, 95–97, Gly-134, Glu-147, Asn-162, and Asn-216 contribute to the UDP-N-acetyl-alpha-D-glucosamine site; these read LAAG, GT, and YGD. Asp-97 lines the Mg(2+) pocket. A Mg(2+)-binding site is contributed by Asn-216. A linker region spans residues 219-239; sequence IQLAQLETIAKQRILEKLMLS. The N-acetyltransferase stretch occupies residues 240–452; it reads GVTIVDPNST…EELKNADHKE (213 aa). Arg-321 and Lys-339 together coordinate UDP-N-acetyl-alpha-D-glucosamine. His-351 functions as the Proton acceptor in the catalytic mechanism. UDP-N-acetyl-alpha-D-glucosamine-binding residues include Tyr-354 and Asn-365. Acetyl-CoA is bound by residues Ala-368, 374–375, Ser-393, Ala-411, and Arg-428; that span reads NY.

In the N-terminal section; belongs to the N-acetylglucosamine-1-phosphate uridyltransferase family. This sequence in the C-terminal section; belongs to the transferase hexapeptide repeat family. As to quaternary structure, homotrimer. It depends on Mg(2+) as a cofactor.

The protein resides in the cytoplasm. The enzyme catalyses alpha-D-glucosamine 1-phosphate + acetyl-CoA = N-acetyl-alpha-D-glucosamine 1-phosphate + CoA + H(+). The catalysed reaction is N-acetyl-alpha-D-glucosamine 1-phosphate + UTP + H(+) = UDP-N-acetyl-alpha-D-glucosamine + diphosphate. Its pathway is nucleotide-sugar biosynthesis; UDP-N-acetyl-alpha-D-glucosamine biosynthesis; N-acetyl-alpha-D-glucosamine 1-phosphate from alpha-D-glucosamine 6-phosphate (route II): step 2/2. It functions in the pathway nucleotide-sugar biosynthesis; UDP-N-acetyl-alpha-D-glucosamine biosynthesis; UDP-N-acetyl-alpha-D-glucosamine from N-acetyl-alpha-D-glucosamine 1-phosphate: step 1/1. The protein operates within bacterial outer membrane biogenesis; LPS lipid A biosynthesis. In terms of biological role, catalyzes the last two sequential reactions in the de novo biosynthetic pathway for UDP-N-acetylglucosamine (UDP-GlcNAc). The C-terminal domain catalyzes the transfer of acetyl group from acetyl coenzyme A to glucosamine-1-phosphate (GlcN-1-P) to produce N-acetylglucosamine-1-phosphate (GlcNAc-1-P), which is converted into UDP-GlcNAc by the transfer of uridine 5-monophosphate (from uridine 5-triphosphate), a reaction catalyzed by the N-terminal domain. The polypeptide is Bifunctional protein GlmU (Fervidobacterium nodosum (strain ATCC 35602 / DSM 5306 / Rt17-B1)).